Consider the following 117-residue polypeptide: Large ribosomal subunit protein bL20 (117 aa).

This sequence belongs to the bacterial ribosomal protein bL20 family.

In terms of biological role, binds directly to 23S ribosomal RNA and is necessary for the in vitro assembly process of the 50S ribosomal subunit. It is not involved in the protein synthesizing functions of that subunit. The chain is Large ribosomal subunit protein bL20 from Lawsonia intracellularis (strain PHE/MN1-00).